Here is a 48-residue protein sequence, read N- to C-terminus: MCISIDIERKKKSNIYINLYINMKILIYISLVFNNLSALIDKHIISYK.

It localises to the plastid. Its subcellular location is the cyanelle. This is an uncharacterized protein from Cyanophora paradoxa.